The primary structure comprises 126 residues: Histone H2B type 1-K (126 aa).

Low complexity predominate over residues 1–12 (MPEPAKSAPAPK). Positions 1-36 (MPEPAKSAPAPKKGSKKAVTKAQKKDGKKRKRSRKE) are disordered. Proline 2 carries the post-translational modification N-acetylproline. Glutamate 3 carries the post-translational modification ADP-ribosyl glutamic acid. Lysine 6 is modified (N6-(2-hydroxyisobutyryl)lysine; alternate). Residue lysine 6 is modified to N6-(beta-hydroxybutyryl)lysine; alternate. Lysine 6 carries the post-translational modification N6-acetyllysine; alternate. Residue lysine 6 is modified to N6-butyryllysine; alternate. Lysine 6 carries the N6-crotonyllysine; alternate modification. Lysine 6 bears the N6-lactoyllysine; alternate mark. A Glycyl lysine isopeptide (Lys-Gly) (interchain with G-Cter in SUMO2); alternate cross-link involves residue lysine 6. ADP-ribosylserine is present on serine 7. Lysine 12 carries the post-translational modification N6-(beta-hydroxybutyryl)lysine; alternate. 2 positions are modified to N6-acetyllysine; alternate: lysine 12 and lysine 13. Residues lysine 12 and lysine 13 each carry the N6-crotonyllysine; alternate modification. Lysine 12 bears the N6-lactoyllysine; alternate mark. An N6-(2-hydroxyisobutyryl)lysine; alternate modification is found at lysine 13. Phosphoserine; by STK4/MST1 is present on serine 15. Lysine 16, lysine 17, lysine 21, and lysine 24 each carry N6-acetyllysine; alternate. An N6-crotonyllysine; alternate mark is found at lysine 16, lysine 17, lysine 21, and lysine 24. N6-lactoyllysine; alternate occurs at positions 16, 17, 21, and 24. Lysine 17 carries the N6-glutaryllysine; alternate modification. N6-(2-hydroxyisobutyryl)lysine; alternate is present on residues lysine 21 and lysine 24. Lysine 21 bears the N6-(beta-hydroxybutyryl)lysine; alternate mark. The residue at position 21 (lysine 21) is an N6-butyryllysine; alternate. Lysine 21 is covalently cross-linked (Glycyl lysine isopeptide (Lys-Gly) (interchain with G-Cter in SUMO2); alternate). Lysine 25 carries the post-translational modification N6-(2-hydroxyisobutyryl)lysine. The residue at position 35 (lysine 35) is an N6-(2-hydroxyisobutyryl)lysine; alternate. Lysine 35 carries the N6-(beta-hydroxybutyryl)lysine; alternate modification. Lysine 35 is subject to N6-crotonyllysine; alternate. Lysine 35 bears the N6-glutaryllysine; alternate mark. Position 35 is an N6-succinyllysine; alternate (lysine 35). Lysine 35 participates in a covalent cross-link: Glycyl lysine isopeptide (Lys-Gly) (interchain with G-Cter in ubiquitin); alternate. Residue glutamate 36 is modified to PolyADP-ribosyl glutamic acid. A Phosphoserine; by AMPK modification is found at serine 37. 3 positions are modified to N6-(2-hydroxyisobutyryl)lysine; alternate: lysine 44, lysine 47, and lysine 58. Residue lysine 44 is modified to N6-lactoyllysine; alternate. 2 positions are modified to N6-glutaryllysine; alternate: lysine 44 and lysine 47. Lysine 47 carries the N6-methyllysine; alternate modification. N6,N6-dimethyllysine; alternate is present on lysine 58. The residue at position 80 (arginine 80) is a Dimethylated arginine. Lysine 86 carries the post-translational modification N6-(2-hydroxyisobutyryl)lysine; alternate. Lysine 86 carries the N6-acetyllysine; alternate modification. The residue at position 86 (lysine 86) is an N6-lactoyllysine; alternate. Lysine 86 bears the N6,N6,N6-trimethyllysine; alternate mark. Omega-N-methylarginine is present on residues arginine 87 and arginine 93. An N6-(2-hydroxyisobutyryl)lysine; alternate modification is found at lysine 109. At lysine 109 the chain carries N6-lactoyllysine; alternate. Position 109 is an N6-glutaryllysine; alternate (lysine 109). Lysine 109 carries the N6-methyllysine; alternate modification. Serine 113 carries O-linked (GlcNAc) serine glycosylation. Threonine 116 carries the phosphothreonine modification. N6-(2-hydroxyisobutyryl)lysine; alternate occurs at positions 117 and 121. Lysine 117 bears the N6-(beta-hydroxybutyryl)lysine; alternate mark. Residues lysine 117 and lysine 121 each carry the N6-lactoyllysine; alternate modification. Residues lysine 117 and lysine 121 each carry the N6-glutaryllysine; alternate modification. 2 positions are modified to N6-succinyllysine; alternate: lysine 117 and lysine 121. The residue at position 117 (lysine 117) is an N6-methylated lysine; alternate. Residue lysine 121 forms a Glycyl lysine isopeptide (Lys-Gly) (interchain with G-Cter in ubiquitin); alternate linkage.

The protein belongs to the histone H2B family. As to quaternary structure, the nucleosome is a histone octamer containing two molecules each of H2A, H2B, H3 and H4 assembled in one H3-H4 heterotetramer and two H2A-H2B heterodimers. The octamer wraps approximately 147 bp of DNA. Monoubiquitination at Lys-35 (H2BK34Ub) by the MSL1/MSL2 dimer is required for histone H3 'Lys-4' (H3K4me) and 'Lys-79' (H3K79me) methylation and transcription activation at specific gene loci, such as HOXA9 and MEIS1 loci. Similarly, monoubiquitination at Lys-121 (H2BK120Ub) by the RNF20/40 complex gives a specific tag for epigenetic transcriptional activation and is also prerequisite for histone H3 'Lys-4' and 'Lys-79' methylation. It also functions cooperatively with the FACT dimer to stimulate elongation by RNA polymerase II. H2BK120Ub also acts as a regulator of mRNA splicing: deubiquitination by USP49 is required for efficient cotranscriptional splicing of a large set of exons. In terms of processing, phosphorylated on Ser-15 (H2BS14ph) by STK4/MST1 during apoptosis; which facilitates apoptotic chromatin condensation. Also phosphorylated on Ser-15 in response to DNA double strand breaks (DSBs), and in correlation with somatic hypermutation and immunoglobulin class-switch recombination. Phosphorylation at Ser-37 (H2BS36ph) by AMPK in response to stress promotes transcription. Post-translationally, glcNAcylation at Ser-113 promotes monoubiquitination of Lys-121. It fluctuates in response to extracellular glucose, and associates with transcribed genes. ADP-ribosylated by PARP1 or PARP2 on Ser-7 (H2BS6ADPr) in response to DNA damage. H2BS6ADPr promotes recruitment of CHD1L. Mono-ADP-ribosylated on Glu-3 (H2BE2ADPr) by PARP3 in response to single-strand breaks. Poly ADP-ribosylation on Glu-36 (H2BE35ADPr) by PARP1 regulates adipogenesis: it inhibits phosphorylation at Ser-37 (H2BS36ph), thereby blocking expression of pro-adipogenetic genes. In terms of processing, crotonylation (Kcr) is specifically present in male germ cells and marks testis-specific genes in post-meiotic cells, including X-linked genes that escape sex chromosome inactivation in haploid cells. Crotonylation marks active promoters and enhancers and confers resistance to transcriptional repressors. It is also associated with post-meiotically activated genes on autosomes. Post-translationally, lactylated in macrophages by EP300/P300 by using lactoyl-CoA directly derived from endogenous or exogenous lactate, leading to stimulates gene transcription.

The protein localises to the nucleus. It is found in the chromosome. Functionally, core component of nucleosome. Nucleosomes wrap and compact DNA into chromatin, limiting DNA accessibility to the cellular machineries which require DNA as a template. Histones thereby play a central role in transcription regulation, DNA repair, DNA replication and chromosomal stability. DNA accessibility is regulated via a complex set of post-translational modifications of histones, also called histone code, and nucleosome remodeling. The chain is Histone H2B type 1-K from Macaca fascicularis (Crab-eating macaque).